A 217-amino-acid polypeptide reads, in one-letter code: Lipid transferase CIDEA (217 aa).

In terms of domain architecture, CIDE-N spans 33–110 (PARPFRVSNH…ILEKGQKWTP (78 aa)). The segment at 163–180 (CTSFKAVLRNLLRFMSYA) is amphipathic helix.

Belongs to the CIDE family. As to quaternary structure, homodimer. Interacts with CIDEC. Directly interacts with CEBPB. Interacts with isoform CLSTN3beta of CLSTN3; inhibiting the lipid transferase activity of CIDEA. In terms of tissue distribution, highly expressed in brown adipose tissue and, at lower levels, in white adipose tissue (at protein level). Undetectable in undifferentiated preadipocytes. Expressed in mammary gland during pregnancy and lactation, in epithelial cells, but not in the surrounding adipose tissue. Secreted into milk via milk fat globules.

It localises to the lipid droplet. The protein resides in the nucleus. It catalyses the reaction a triacyl-sn-glycerol(in) = a triacyl-sn-glycerol(out). Its function is as follows. Lipid transferase that promotes unilocular lipid droplet formation by mediating lipid droplet fusion. Lipid droplet fusion promotes their enlargement, restricting lipolysis and favoring lipid storage. Localizes on the lipid droplet surface, at focal contact sites between lipid droplets, and mediates atypical lipid droplet fusion by promoting directional net neutral lipid transfer from the smaller to larger lipid droplets. The transfer direction may be driven by the internal pressure difference between the contacting lipid droplet pair and occurs at a lower rate than that promoted by CIDEC. May also act as a CEBPB coactivator in epithelial cells to control the expression of a subset of CEBPB downstream target genes, including ID2, IGF1, PRLR, SOCS1, SOCS3, XDH, but not casein. By interacting with CEBPB, strengthens the association of CEBPB with the XDH promoter, increases histone acetylation and dissociates HDAC1 from the promoter. When overexpressed, induces apoptosis; the physiological significance of its role in apoptosis is unclear. This is Lipid transferase CIDEA from Mus musculus (Mouse).